The sequence spans 259 residues: tRNA (guanine-N(7)-)-methyltransferase (259 aa).

S-adenosyl-L-methionine-binding positions include glycine 80, 103-104, 136-137, and leucine 156; these read EL and NS. Aspartate 159 is a catalytic residue. 234–236 lines the S-adenosyl-L-methionine pocket; it reads TEE.

The protein belongs to the class I-like SAM-binding methyltransferase superfamily. TrmB family.

The protein resides in the nucleus. The catalysed reaction is guanosine(46) in tRNA + S-adenosyl-L-methionine = N(7)-methylguanosine(46) in tRNA + S-adenosyl-L-homocysteine. It participates in tRNA modification; N(7)-methylguanine-tRNA biosynthesis. Functionally, catalyzes the formation of N(7)-methylguanine at position 46 (m7G46) in tRNA. The polypeptide is tRNA (guanine-N(7)-)-methyltransferase (Oryza sativa subsp. indica (Rice)).